Consider the following 59-residue polypeptide: Chromatin protein Cren7 (59 aa).

The protein belongs to the Cren7 family. Monomer. Methylated at multiple sites, to varying extents.

It localises to the chromosome. It is found in the cytoplasm. In terms of biological role, a chromatin protein, binds double-stranded DNA without sequence specificity. Constrains negative DNA supercoils. The sequence is that of Chromatin protein Cren7 from Pyrobaculum aerophilum (strain ATCC 51768 / DSM 7523 / JCM 9630 / CIP 104966 / NBRC 100827 / IM2).